A 132-amino-acid chain; its full sequence is Agouti-signaling protein (132 aa).

Positions 1 to 22 (MDVTRLVLATLLVFLCFFAAYS) are cleaved as a signal peptide. Asparagine 39 carries an N-linked (GlcNAc...) asparagine glycan. Positions 60–93 (KKISRKEAEKRRSSKKEASKQKVARPRTPLSVPC) are disordered. Positions 64 to 79 (RKEAEKRRSSKKEASK) are enriched in basic and acidic residues. 5 disulfide bridges follow: cysteine 93/cysteine 108, cysteine 100/cysteine 114, cysteine 107/cysteine 125, cysteine 111/cysteine 132, and cysteine 116/cysteine 123. Positions 93 to 132 (CVSTRGSCKPPAPACCHPCASCQCRFFRSACSCRVLNVNC) constitute an Agouti domain.

The protein localises to the secreted. Functionally, involved in the regulation of melanogenesis. The binding of ASP to MC1R precludes alpha-MSH initiated signaling and thus blocks production of cAMP, leading to a down-regulation of eumelanogenesis (brown/black pigment) and thus increasing synthesis of pheomelanin (yellow/red pigment). This Cebuella pygmaea (Pygmy marmoset) protein is Agouti-signaling protein (ASIP).